Reading from the N-terminus, the 517-residue chain is Cytochrome P450 monooxygenase sdnE (517 aa).

Residues serine 4–tyrosine 24 form a helical membrane-spanning segment. Asparagine 111 carries N-linked (GlcNAc...) asparagine glycosylation. The chain crosses the membrane as a helical span at residues phenylalanine 219–proline 239. Cysteine 456 is a binding site for heme.

This sequence belongs to the cytochrome P450 family. The cofactor is heme.

The protein resides in the membrane. Its pathway is antibiotic biosynthesis. Cytochrome P450 monooxygenase; part of the gene cluster that mediates the biosynthesis of sordarin and hypoxysordarin, glycoside antibiotics with a unique tetracyclic diterpene aglycone structure. First, the geranylgeranyl diphosphate synthase sdnC constructs GGDP from farnesyl diphosphate and isopentenyl diphosphate. The diterpene cyclase sdnA then catalyzes the cyclization of GGDP to afford cycloaraneosene. Cycloaraneosene is then hydroxylated four times by the putative cytochrome P450 monooxygenases sdnB, sdnE, sdnF and sdnH to give a hydroxylated cycloaraneosene derivative such as cycloaraneosene-8,9,13,19-tetraol. Although the order of the hydroxylations is unclear, at least C8, C9 and C13 of the cycloaraneosene skeleton are hydroxylated before the sordaricin formation. Dehydration of the 13-hydroxy group of the hydroxylated cycloaraneosene derivative might be catalyzed by an unassigned hypothetical protein such as sdnG and sdnP to construct the cyclopentadiene moiety. The FAD-dependent oxidoreductase sdnN is proposed to catalyze the oxidation at C9 of the hydroxylated cycloaraneosene derivative and also catalyze the Baeyer-Villiger oxidation to give the lactone intermediate. The presumed lactone intermediate would be hydrolyzed to give an acrolein moiety and a carboxylate moiety. Then, [4+2]cycloaddition would occur between the acrolein moiety and the cyclopentadiene moiety to give sordaricin. SdnN might also be involved in the [4+2]cycloaddition after the hypothesized oxidation to accommodate the oxidized product and prompt the [4+2]cycloaddition. GDP-6-deoxy-D-altrose may be biosynthesized from GDP-D-mannose by the putative GDP-mannose-4,6-dehydratase sdnI and the short-chain dehydrogenase sdnK. The glycosyltransferase sdnJ catalyzes the attachment of 6-deoxy-D-altrose onto the 19-hydroxy group of sordaricin to give 4'-O-demethylsordarin. The methyltransferase sdnD would complete the biosynthesis of sordarin. Sordarin can be further modified into hypoxysordarin. The unique acyl chain at the 3'-hydroxy group of hypoxysordarin would be constructed by an iterative type I PKS sdnO and the trans-acting polyketide methyltransferase sdnL. SdnL would be responsible for the introduction of an alpha-methyl group of the polyketide chain. Alternatively, the beta-lactamase-like protein sdnR might be responsible for the cleavage and transfer of the polyketide chain from the PKS sdnO to sordarin. Two putative cytochrome P450 monooxygenases, sdnQ and sdnT, might catalyze the epoxidations of the polyketide chain to complete the biosynthesis of hypoxysordarin. Transcriptional regulators sdnM and sdnS are presumably encoded for the transcriptional regulation of the expression of the sdn gene cluster. The protein is Cytochrome P450 monooxygenase sdnE of Sordaria araneosa (Pleurage araneosa).